A 251-amino-acid polypeptide reads, in one-letter code: Hydroxyacylglutathione hydrolase (251 aa).

Residues His-53, His-55, Asp-57, His-58, His-110, Asp-127, and His-165 each coordinate Zn(2+).

Belongs to the metallo-beta-lactamase superfamily. Glyoxalase II family. As to quaternary structure, monomer. The cofactor is Zn(2+).

The enzyme catalyses an S-(2-hydroxyacyl)glutathione + H2O = a 2-hydroxy carboxylate + glutathione + H(+). Its pathway is secondary metabolite metabolism; methylglyoxal degradation; (R)-lactate from methylglyoxal: step 2/2. In terms of biological role, thiolesterase that catalyzes the hydrolysis of S-D-lactoyl-glutathione to form glutathione and D-lactic acid. The chain is Hydroxyacylglutathione hydrolase from Erwinia tasmaniensis (strain DSM 17950 / CFBP 7177 / CIP 109463 / NCPPB 4357 / Et1/99).